A 393-amino-acid chain; its full sequence is S-adenosylmethionine synthase (393 aa).

Glu9 is a Mg(2+) binding site. His15 lines the ATP pocket. Glu43 is a K(+) binding site. L-methionine is bound by residues Glu56 and Gln99. Residues 167 to 169 (DGK), 235 to 238 (SGRF), Asp246, 252 to 253 (RK), Ala269, Lys273, and Lys277 contribute to the ATP site. Asp246 lines the L-methionine pocket. Lys277 is a binding site for L-methionine.

It belongs to the AdoMet synthase family. Homotetramer. Mn(2+) serves as cofactor. Requires Mg(2+) as cofactor. The cofactor is Co(2+). It depends on K(+) as a cofactor.

Its subcellular location is the cytoplasm. It catalyses the reaction L-methionine + ATP + H2O = S-adenosyl-L-methionine + phosphate + diphosphate. The protein operates within amino-acid biosynthesis; S-adenosyl-L-methionine biosynthesis; S-adenosyl-L-methionine from L-methionine: step 1/1. Catalyzes the formation of S-adenosylmethionine from methionine and ATP. The reaction comprises two steps that are both catalyzed by the same enzyme: formation of S-adenosylmethionine (AdoMet) and triphosphate, and subsequent hydrolysis of the triphosphate. In Litchi chinensis (Lychee), this protein is S-adenosylmethionine synthase (SAMS).